The sequence spans 218 residues: Small ribosomal subunit protein mS34 (218 aa).

The disordered stretch occupies residues 180-218 (KNGDTSTEEPMLNVQRIRMEPWDYPAKQEDKGRAKGTPV). Basic and acidic residues predominate over residues 196 to 212 (IRMEPWDYPAKQEDKGR).

This sequence belongs to the mitochondrion-specific ribosomal protein mS34 family. As to quaternary structure, component of the mitochondrial small ribosomal subunit (mt-SSU). Mature mammalian 55S mitochondrial ribosomes consist of a small (28S) and a large (39S) subunit. The 28S small subunit contains a 12S ribosomal RNA (12S mt-rRNA) and 30 different proteins. The 39S large subunit contains a 16S rRNA (16S mt-rRNA), a copy of mitochondrial valine transfer RNA (mt-tRNA(Val)), which plays an integral structural role, and 52 different proteins.

The protein localises to the mitochondrion. Functionally, required for mitochondrial translation, plays a role in maintaining the stability of the small ribosomal subunit and the 12S rRNA that are required for mitoribosome formation. The chain is Small ribosomal subunit protein mS34 (MRPS34) from Homo sapiens (Human).